We begin with the raw amino-acid sequence, 1221 residues long: Phosphoenolpyruvate carboxylase 2 (1221 aa).

His-156 is an active-site residue. Disordered stretches follow at residues 443–588 and 642–661; these read TAAE…DPTF and REPAGEAHGGVGAGGGGGGG. Composition is skewed to low complexity over residues 503-513 and 550-564; these read TTTATAAAAAA and PFREAANAAMSTAAS. Composition is skewed to gly residues over residues 565-575 and 648-661; these read GGAGGGGGGGA and AHGGVGAGGGGGGG. The active site involves Lys-886.

Belongs to the PEPCase type 1 family. Requires Mg(2+) as cofactor.

The protein localises to the cytoplasm. It catalyses the reaction oxaloacetate + phosphate = phosphoenolpyruvate + hydrogencarbonate. In terms of biological role, through the carboxylation of phosphoenolpyruvate (PEP) it forms oxaloacetate, a four-carbon dicarboxylic acid source for the tricarboxylic acid cycle. The sequence is that of Phosphoenolpyruvate carboxylase 2 from Chlamydomonas reinhardtii (Chlamydomonas smithii).